Reading from the N-terminus, the 296-residue chain is Carboxylesterase YbfK (296 aa).

Catalysis depends on charge relay system residues Ser129, Glu244, and His273.

It belongs to the AB hydrolase superfamily.

It localises to the cytoplasm. It catalyses the reaction a carboxylic ester + H2O = an alcohol + a carboxylate + H(+). Its function is as follows. Shows carboxylesterase activity in vitro. The polypeptide is Carboxylesterase YbfK (ybfK) (Bacillus subtilis (strain 168)).